A 1016-amino-acid polypeptide reads, in one-letter code: TBC1 domain family member 5 homolog B (1016 aa).

Disordered regions lie at residues 1 to 23, 60 to 109, 179 to 209, 463 to 566, and 704 to 872; these read MDTS…IRNS, SPLI…TTTT, NNNN…DMNN, PTQQ…EEEE, and PPTT…SSHV. A compositionally biased stretch (polar residues) spans 12–23; that stretch reads NSGTTTPNIRNS. Residues 79 to 88 show a composition bias toward low complexity; that stretch reads QQQQQQQQQQ. Residues 280–636 form the Rab-GAP TBC domain; that stretch reads LKYSPLRGIA…NIWDALFAYG (357 aa). The segment covering 467–525 has biased composition (low complexity); the sequence is TNNSNNSNNTNNNNTTTSPSSSSSSSSSSTTTAAATTVSSSTSTSSSSSTITSSSSSTV. Over residues 526–544 the composition is skewed to pro residues; that stretch reads SPPPPSSSSSPSPPPPPPL. Low complexity predominate over residues 545–558; sequence GSNSPTVASSSSSS. Positions 704-717 are enriched in polar residues; it reads PPTTLSSSGSRQIP. Low complexity-rich tracts occupy residues 718–755 and 766–789; these read NNNN…NNNI and PFPE…QLSS. Over residues 790 to 806 the composition is skewed to polar residues; that stretch reads ANTTPIDPLSNKTTPLI. The span at 807–872 shows a compositional bias: low complexity; that stretch reads SSTSNVSNTP…SSSLNNSSHV (66 aa).

Functionally, may act as a GTPase-activating protein for Rab family protein(s). The polypeptide is TBC1 domain family member 5 homolog B (tbc1d5B) (Dictyostelium discoideum (Social amoeba)).